The chain runs to 169 residues: Cell division inhibitor SulA (169 aa).

Over residues 1–13 (MFTSAHANRSAQA) the composition is skewed to polar residues. Residues 1 to 26 (MFTSAHANRSAQASAPAGHYAHRSGE) form a disordered region. The ftsZ binding stretch occupies residues 106 to 112 (ALRTGNY). The tract at residues 162–169 (KIHSNLYH) is lon protease binding.

It belongs to the SulA family. Interacts with FtsZ. In terms of processing, is rapidly cleaved and degraded by the Lon protease once DNA damage is repaired.

Component of the SOS system and an inhibitor of cell division. Accumulation of SulA causes rapid cessation of cell division and the appearance of long, non-septate filaments. In the presence of GTP, binds a polymerization-competent form of FtsZ in a 1:1 ratio, thus inhibiting FtsZ polymerization and therefore preventing it from participating in the assembly of the Z ring. This mechanism prevents the premature segregation of damaged DNA to daughter cells during cell division. This chain is Cell division inhibitor SulA, found in Klebsiella pneumoniae subsp. pneumoniae (strain ATCC 700721 / MGH 78578).